An 863-amino-acid polypeptide reads, in one-letter code: Envelope glycoprotein gp160 (863 aa).

A signal peptide spans 1-31 (MRVMGIRMNYQHLWKWGIMLLGILMTCSVAE). Residues 32 to 691 (DLWVTVYYGV…ITKWLWYIKI (660 aa)) are Extracellular-facing. A disulfide bridge connects residues cysteine 53 and cysteine 73. N-linked (GlcNAc...) asparagine; by host glycosylation is found at asparagine 87, asparagine 129, asparagine 136, asparagine 142, asparagine 143, asparagine 159, asparagine 163, asparagine 194, asparagine 199, asparagine 209, asparagine 246, asparagine 274, asparagine 288, asparagine 301, and asparagine 307. Intrachain disulfides connect cysteine 118-cysteine 217, cysteine 125-cysteine 208, cysteine 130-cysteine 160, cysteine 230-cysteine 259, and cysteine 240-cysteine 251. The segment at 130–159 (CTNAGGNKTTNGNNTTNQEEQMMEKGEMKN) is V1. The segment at 160 to 208 (CSFNITTVISDKKKQVHALFYRLDVVPIDDDNSANTSNTNYTNYRLINC) is V2. A V3 region spans residues 308 to 341 (CTRPDNKITRQSTPIGLGQALYTTRIKGDIRQAY). Cysteine 308 and cysteine 342 are oxidised to a cystine. N-linked (GlcNAc...) asparagine; by host glycans are attached at residues asparagine 343, asparagine 350, and asparagine 365. The segment at 374–384 (PAGGDPEITTH) is CD4-binding loop. 2 cysteine pairs are disulfide-bonded: cysteine 388-cysteine 452 and cysteine 395-cysteine 425. The tract at residues 395–425 (CNTSRLFNSTWNSSTWNNDTLNSEGTIKLPC) is V4. N-linked (GlcNAc...) asparagine; by host glycans are attached at residues asparagine 396, asparagine 402, asparagine 406, asparagine 412, asparagine 455, asparagine 468, asparagine 469, and asparagine 472. V5 stretches follow at residues 467–478 (VNNSTNETFRPG) and 470–478 (STNETFRPG). Residues 519–539 (AIGLGAVFLGFLGAAGSTMGA) are fusion peptide. Positions 581 to 599 (KQLQARVLAVESYLKDQQL) are immunosuppression. Cysteine 605 and cysteine 611 are oxidised to a cystine. N-linked (GlcNAc...) asparagine; by host glycosylation is found at asparagine 618, asparagine 623, asparagine 632, and asparagine 644. A coiled-coil region spans residues 640 to 674 (REIDNYTGVIYSLIENSQIQQEKNEQDLLQLDKWA). The tract at residues 669–690 (QLDKWASLWNWFSITKWLWYIK) is MPER; binding to GalCer. The helical transmembrane segment at 692-712 (FIMIVGGLIGLRIVFTVLSLV) threads the bilayer. Over 713-863 (NRVRQGYSPL…VRQGLERALL (151 aa)) the chain is Cytoplasmic. A YXXL motif; contains endocytosis signal motif is present at residues 719–722 (YSPL). Positions 729–748 (PAPRGPDRPEGIEEEGGEQG) are disordered. Cysteine 771 carries S-palmitoyl cysteine; by host lipidation. The short motif at 862-863 (LL) is the Di-leucine internalization motif element.

The protein belongs to the HIV-1 env protein family. The mature envelope protein (Env) consists of a homotrimer of non-covalently associated gp120-gp41 heterodimers. The resulting complex protrudes from the virus surface as a spike. There seems to be as few as 10 spikes on the average virion. Interacts with host CD4, CCR5 and CXCR4. Gp120 also interacts with the C-type lectins CD209/DC-SIGN and CLEC4M/DC-SIGNR (collectively referred to as DC-SIGN(R)). Gp120 and gp41 interact with GalCer. Gp120 interacts with host ITGA4/ITGB7 complex; on CD4+ T-cells, this interaction results in rapid activation of integrin ITGAL/LFA-1, which facilitates efficient cell-to-cell spreading of HIV-1. Gp120 interacts with cell-associated heparan sulfate; this interaction increases virus infectivity on permissive cells and may be involved in infection of CD4- cells. In terms of assembly, the mature envelope protein (Env) consists of a homotrimer of non-covalently associated gp120-gp41 heterodimers. The resulting complex protrudes from the virus surface as a spike. There seems to be as few as 10 spikes on the average virion. In terms of processing, highly glycosylated by host. The high number of glycan on the protein is reffered to as 'glycan shield' because it contributes to hide protein sequence from adaptive immune system. Post-translationally, palmitoylation of the transmembrane protein and of Env polyprotein (prior to its proteolytic cleavage) is essential for their association with host cell membrane lipid rafts. Palmitoylation is therefore required for envelope trafficking to classical lipid rafts, but not for viral replication. Specific enzymatic cleavages in vivo yield mature proteins. Envelope glycoproteins are synthesized as an inactive precursor that is heavily N-glycosylated and processed likely by host cell furin in the Golgi to yield the mature SU and TM proteins. The cleavage site between SU and TM requires the minimal sequence [KR]-X-[KR]-R. About 2 of the 9 disulfide bonds of gp41 are reduced by P4HB/PDI, following binding to CD4 receptor.

Its subcellular location is the virion membrane. It localises to the host cell membrane. The protein localises to the host endosome membrane. In terms of biological role, oligomerizes in the host endoplasmic reticulum into predominantly trimers. In a second time, gp160 transits in the host Golgi, where glycosylation is completed. The precursor is then proteolytically cleaved in the trans-Golgi and thereby activated by cellular furin or furin-like proteases to produce gp120 and gp41. Its function is as follows. Attaches the virus to the host lymphoid cell by binding to the primary receptor CD4. This interaction induces a structural rearrangement creating a high affinity binding site for a chemokine coreceptor like CXCR4 and/or CCR5. Acts as a ligand for CD209/DC-SIGN and CLEC4M/DC-SIGNR, which are respectively found on dendritic cells (DCs), and on endothelial cells of liver sinusoids and lymph node sinuses. These interactions allow capture of viral particles at mucosal surfaces by these cells and subsequent transmission to permissive cells. HIV subverts the migration properties of dendritic cells to gain access to CD4+ T-cells in lymph nodes. Virus transmission to permissive T-cells occurs either in trans (without DCs infection, through viral capture and transmission), or in cis (following DCs productive infection, through the usual CD4-gp120 interaction), thereby inducing a robust infection. In trans infection, bound virions remain infectious over days and it is proposed that they are not degraded, but protected in non-lysosomal acidic organelles within the DCs close to the cell membrane thus contributing to the viral infectious potential during DCs' migration from the periphery to the lymphoid tissues. On arrival at lymphoid tissues, intact virions recycle back to DCs' cell surface allowing virus transmission to CD4+ T-cells. Functionally, acts as a class I viral fusion protein. Under the current model, the protein has at least 3 conformational states: pre-fusion native state, pre-hairpin intermediate state, and post-fusion hairpin state. During fusion of viral and target intracellular membranes, the coiled coil regions (heptad repeats) assume a trimer-of-hairpins structure, positioning the fusion peptide in close proximity to the C-terminal region of the ectodomain. The formation of this structure appears to drive apposition and subsequent fusion of viral and target cell membranes. Complete fusion occurs in host cell endosomes and is dynamin-dependent, however some lipid transfer might occur at the plasma membrane. The virus undergoes clathrin-dependent internalization long before endosomal fusion, thus minimizing the surface exposure of conserved viral epitopes during fusion and reducing the efficacy of inhibitors targeting these epitopes. Membranes fusion leads to delivery of the nucleocapsid into the cytoplasm. The polypeptide is Envelope glycoprotein gp160 (Human immunodeficiency virus type 1 group M subtype D (isolate Z84) (HIV-1)).